A 507-amino-acid chain; its full sequence is Cytochrome P450 monooxygenase cloA (507 aa).

A helical membrane pass occupies residues 15 to 35 (WTWILLTTCIALISPLVLKGI). Residue Asn247 is glycosylated (N-linked (GlcNAc...) asparagine). Cys450 lines the heme pocket.

The protein belongs to the cytochrome P450 family. The cofactor is heme.

The protein localises to the membrane. It functions in the pathway alkaloid biosynthesis; ergot alkaloid biosynthesis. Functionally, cytochrome P450 monooxygenase; part of the gene cluster that mediates the biosynthesis of fungal ergot alkaloid. DmaW catalyzes the first step of ergot alkaloid biosynthesis by condensing dimethylallyl diphosphate (DMAP) and tryptophan to form 4-dimethylallyl-L-tryptophan. The second step is catalyzed by the methyltransferase easF that methylates 4-dimethylallyl-L-tryptophan in the presence of S-adenosyl-L-methionine, resulting in the formation of 4-dimethylallyl-L-abrine. The catalase easC and the FAD-dependent oxidoreductase easE then transform 4-dimethylallyl-L-abrine to chanoclavine-I which is further oxidized by easD in the presence of NAD(+), resulting in the formation of chanoclavine-I aldehyde. Agroclavine dehydrogenase easG then mediates the conversion of chanoclavine-I aldehyde to agroclavine via a non-enzymatic adduct reaction: the substrate is an iminium intermediate that is formed spontaneously from chanoclavine-I aldehyde in the presence of glutathione. The presence of easA is not required to complete this reaction. Further conversion of agroclavine to paspalic acid is a two-step process involving oxidation of agroclavine to elymoclavine and of elymoclavine to paspalic acid, the second step being performed by the elymoclavine oxidase cloA. Paspalic acid is then further converted to D-lysergic acid. Ergopeptines are assembled from D-lysergic acid and three different amino acids by the D-lysergyl-peptide-synthetases composed each of a monomudular and a trimodular nonribosomal peptide synthetase subunit. LpsB and lpsC encode the monomodular subunits responsible for D-lysergic acid activation and incorporation into the ergopeptine backbone. LpsA1 and A2 subunits encode the trimodular nonribosomal peptide synthetase assembling the tripeptide portion of ergopeptines. LpsA1 is responsible for formation of the major ergopeptine, ergotamine, and lpsA2 for alpha-ergocryptine, the minor ergopeptine of the total alkaloid mixture elaborated by C.purpurea. D-lysergyl-tripeptides are assembled by the nonribosomal peptide synthetases and released as N-(D-lysergyl-aminoacyl)-lactams. Cyclolization of the D-lysergyl-tripeptides is performed by the Fe(2+)/2-ketoglutarate-dependent dioxygenase easH which introduces a hydroxyl group into N-(D-lysergyl-aminoacyl)-lactam at alpha-C of the aminoacyl residue followed by spontaneous condensation with the terminal lactam carbonyl group. The polypeptide is Cytochrome P450 monooxygenase cloA (Claviceps purpurea (strain 20.1) (Ergot fungus)).